The sequence spans 519 residues: Probable FAD synthase (519 aa).

The segment at 17–108 (AILVIGDEIL…TDQMQFSDEI (92 aa)) is molybdenum cofactor biosynthesis protein-like. An FAD synthase region spans residues 328–485 (QIALSFNGGK…SLGGRDNTVK (158 aa)).

The protein in the N-terminal section; belongs to the MoaB/Mog family. It in the C-terminal section; belongs to the PAPS reductase family. FAD1 subfamily. Mg(2+) serves as cofactor.

The enzyme catalyses FMN + ATP + H(+) = FAD + diphosphate. It functions in the pathway cofactor biosynthesis; FAD biosynthesis; FAD from FMN: step 1/1. Functionally, catalyzes the adenylation of flavin mononucleotide (FMN) to form flavin adenine dinucleotide (FAD) coenzyme. This Caenorhabditis elegans protein is Probable FAD synthase.